A 73-amino-acid polypeptide reads, in one-letter code: Ocellatin-PT6 (73 aa).

The N-terminal stretch at 1-22 (MAFLKKSLFLVLFLGLVSLSIC) is a signal peptide. Positions 23 to 39 (DEEKRQDEDDDDDDDEE) are excised as a propeptide.

Expressed by the skin glands.

The protein resides in the secreted. In terms of biological role, has antibacterial activity against Gram-negative bacterium E.coli ATCC 25922 (MIC=120 uM) but not against S.pneumoniae ATCC 700603, S.choleraesuis ATCC 14028 or against Gram-positive bacterium S.aureus ATCC 29313. Shows no hemolytic activity and no cytotoxicity. The sequence is that of Ocellatin-PT6 from Leptodactylus pustulatus (Ceara white-lipped frog).